Reading from the N-terminus, the 116-residue chain is Large ribosomal subunit protein bL17 (116 aa).

Belongs to the bacterial ribosomal protein bL17 family. Part of the 50S ribosomal subunit. Contacts protein L32.

This chain is Large ribosomal subunit protein bL17, found in Crocosphaera subtropica (strain ATCC 51142 / BH68) (Cyanothece sp. (strain ATCC 51142)).